The primary structure comprises 104 residues: Protamine-2 (104 aa).

Ser8 and Ser10 each carry phosphoserine. Residues 23 to 104 (WQEQGRNGQE…SRRRRRCRRY (82 aa)) are disordered. A compositionally biased stretch (low complexity) spans 24 to 35 (QEQGRNGQEEQG). Ser37 bears the Phosphoserine mark. A compositionally biased stretch (basic residues) spans 54 to 104 (YRRRRCSRRRRYRIHRRRSRSCRRRRRRSCRYRRRPRRGCRSRRRRRCRRY).

This sequence belongs to the protamine P2 family. Interacts with TDRP. In terms of processing, proteolytic processing into mature chains is required for histone eviction during spermatogenesis. Transition proteins (TNP1 and TNP2) are required for processing. As to expression, testis.

The protein resides in the nucleus. Its subcellular location is the chromosome. Functionally, protamines substitute for histones in the chromatin of sperm during the haploid phase of spermatogenesis. They compact sperm DNA into a highly condensed, stable and inactive complex. The protein is Protamine-2 (PRM2) of Callithrix jacchus (White-tufted-ear marmoset).